An 86-amino-acid polypeptide reads, in one-letter code: Neurotoxin 3FTx-RK (86 aa).

The N-terminal stretch at 1–21 (MKTLLLTLVVVTIVCLELGYT) is a signal peptide. 4 disulfide bridges follow: Cys-24–Cys-45, Cys-38–Cys-63, Cys-67–Cys-78, and Cys-79–Cys-84.

As to expression, expressed by the venom gland.

The protein resides in the secreted. The chain is Neurotoxin 3FTx-RK from Bungarus fasciatus (Banded krait).